A 193-amino-acid polypeptide reads, in one-letter code: Protein D5 (193 aa).

Its function is as follows. Repression of replication initiation (possible). The sequence is that of Protein D5 (ddpE) from Dictyostelium discoideum (Social amoeba).